The following is a 193-amino-acid chain: 3-isopropylmalate dehydratase small subunit (193 aa).

It belongs to the LeuD family. LeuD type 1 subfamily. In terms of assembly, heterodimer of LeuC and LeuD.

The catalysed reaction is (2R,3S)-3-isopropylmalate = (2S)-2-isopropylmalate. It participates in amino-acid biosynthesis; L-leucine biosynthesis; L-leucine from 3-methyl-2-oxobutanoate: step 2/4. In terms of biological role, catalyzes the isomerization between 2-isopropylmalate and 3-isopropylmalate, via the formation of 2-isopropylmaleate. The chain is 3-isopropylmalate dehydratase small subunit from Bacillus cereus (strain 03BB102).